A 507-amino-acid chain; its full sequence is TOM1-like protein 2 (507 aa).

Residues 20–152 (ATDGSLQSED…ELKRKGVEFP (133 aa)) form the VHS domain. Ser160 is subject to Phosphoserine. The disordered stretch occupies residues 162 to 210 (IHTPQRSVPEVDPAATMPRSQSQQRTSAGSYSSPPPAPYSAPQAPALSV). Thr164 carries the post-translational modification Phosphothreonine. A GAT domain is found at 219 to 307 (EQIARLRSEL…VFLRYERFER (89 aa)). The Clathrin-binding motif lies at 329–334 (NLIDLG). The interval 467–507 (RAKAAEMVPDLPSPPMEAPAPASNPSGRKKPERSEDALFAL) is disordered. The span at 498–507 (ERSEDALFAL) shows a compositional bias: basic and acidic residues.

Belongs to the TOM1 family. Interacts with clathrin, SRC and TOLLIP. Interacts with MYO6. Ubiquitously expressed with higher expression in heart and skeletal muscle.

Acts as a MYO6/Myosin VI adapter protein that targets myosin VI to endocytic structures. May also play a role in recruiting clathrin to endosomes. May regulate growth factor-induced mitogenic signaling. This Homo sapiens (Human) protein is TOM1-like protein 2 (TOM1L2).